Reading from the N-terminus, the 739-residue chain is Probable beta-glucosidase L (739 aa).

Positions 1–17 (MQTLFLSLLAAAVTVHA) are cleaved as a signal peptide. N-linked (GlcNAc...) asparagine glycans are attached at residues asparagine 40 and asparagine 224. The active site involves aspartate 252. N-linked (GlcNAc...) asparagine glycosylation occurs at asparagine 398.

This sequence belongs to the glycosyl hydrolase 3 family.

It localises to the secreted. The enzyme catalyses Hydrolysis of terminal, non-reducing beta-D-glucosyl residues with release of beta-D-glucose.. It functions in the pathway glycan metabolism; cellulose degradation. Its function is as follows. Beta-glucosidases are one of a number of cellulolytic enzymes involved in the degradation of cellulosic biomass. Catalyzes the last step releasing glucose from the inhibitory cellobiose. The protein is Probable beta-glucosidase L (bglL) of Aspergillus fumigatus (strain ATCC MYA-4609 / CBS 101355 / FGSC A1100 / Af293) (Neosartorya fumigata).